The chain runs to 522 residues: Leucine-rich repeat transmembrane neuronal protein 1 (522 aa).

A signal peptide spans 1-34 (MDFLLLGLCLYWLLRRPSGVVLCLLGACFQMLPA). In terms of domain architecture, LRRNT spans 35–63 (APSGCPQLCRCEGRLLYCEALNPTEAPHN). Topologically, residues 35 to 427 (APSGCPQLCR…HAENAVQIHK (393 aa)) are extracellular. The N-linked (GlcNAc...) asparagine glycan is linked to asparagine 63. 10 LRR repeats span residues 64–87 (LSGL…QFTG), 89–111 (MQLT…AFQK), 112–135 (LRRV…TFRP), 137–159 (PNLR…LFHG), 161–183 (RKLT…IFQD), 184–207 (CRSL…SFAG), 209–231 (FKLT…HFPR), 233–255 (ISLH…LDWV), 256–278 (WNLK…VFET), and 279–302 (VPHL…ILNS). A glycan (N-linked (GlcNAc...) asparagine) is linked at asparagine 130. The region spanning 314 to 365 (NLWDCGRNVCALASWLSNFQGRYDGNLQCASPEYAQGEDVLDAVYAFHLCED) is the LRRCT domain. A glycan (N-linked (GlcNAc...) asparagine) is linked at asparagine 380. Residues 382-401 (SDLGPPASSATTLADGGEGQ) form a disordered region. A helical transmembrane segment spans residues 428–448 (VVTGTMALIFSFLIVVLVLYV). The Cytoplasmic portion of the chain corresponds to 449 to 522 (SWKCFPASLR…HQQPARECEV (74 aa)).

The protein belongs to the LRRTM family.

Its subcellular location is the cell membrane. The protein localises to the postsynaptic cell membrane. In terms of biological role, exhibits strong synaptogenic activity, restricted to excitatory presynaptic differentiation, acting at both pre- and postsynaptic level. This is Leucine-rich repeat transmembrane neuronal protein 1 (LRRTM1) from Pongo abelii (Sumatran orangutan).